Consider the following 801-residue polypeptide: Elongation factor G, mitochondrial (801 aa).

Residues 1-24 (MRCPSLARLPHRAISGLTRLPVRL) constitute a mitochondrion transit peptide. Positions 99 to 386 (SRIRNIGIAA…GVIDYLPNPS (288 aa)) constitute a tr-type G domain. GTP-binding positions include 108-115 (AHIDSGKT), 184-188 (DTPGH), and 238-241 (NKMD).

The protein belongs to the TRAFAC class translation factor GTPase superfamily. Classic translation factor GTPase family. EF-G/EF-2 subfamily.

Its subcellular location is the mitochondrion. Its pathway is protein biosynthesis; polypeptide chain elongation. Its function is as follows. Mitochondrial GTPase that catalyzes the GTP-dependent ribosomal translocation step during translation elongation. During this step, the ribosome changes from the pre-translocational (PRE) to the post-translocational (POST) state as the newly formed A-site-bound peptidyl-tRNA and P-site-bound deacylated tRNA move to the P and E sites, respectively. Catalyzes the coordinated movement of the two tRNA molecules, the mRNA and conformational changes in the ribosome. The protein is Elongation factor G, mitochondrial (mef1) of Aspergillus clavatus (strain ATCC 1007 / CBS 513.65 / DSM 816 / NCTC 3887 / NRRL 1 / QM 1276 / 107).